The chain runs to 239 residues: Purine nucleoside phosphorylase DeoD-type (239 aa).

Residue H5 participates in a purine D-ribonucleoside binding. Phosphate is bound by residues G21, R25, R44, and 88–91; that span reads RVGS. Residues 180–182 and 204–205 each bind a purine D-ribonucleoside; these read EME and SD. D205 acts as the Proton donor in catalysis.

This sequence belongs to the PNP/UDP phosphorylase family. As to quaternary structure, homohexamer; trimer of homodimers.

It catalyses the reaction a purine D-ribonucleoside + phosphate = a purine nucleobase + alpha-D-ribose 1-phosphate. It carries out the reaction a purine 2'-deoxy-D-ribonucleoside + phosphate = a purine nucleobase + 2-deoxy-alpha-D-ribose 1-phosphate. Its function is as follows. Catalyzes the reversible phosphorolytic breakdown of the N-glycosidic bond in the beta-(deoxy)ribonucleoside molecules, with the formation of the corresponding free purine bases and pentose-1-phosphate. The polypeptide is Purine nucleoside phosphorylase DeoD-type (Salmonella agona (strain SL483)).